The following is a 326-amino-acid chain: Endo-beta-1,4-glucanase A (326 aa).

An N-terminal signal peptide occupies residues Met-1–Gly-19. Glu-150 functions as the Proton donor in the catalytic mechanism. Catalysis depends on Glu-257, which acts as the Nucleophile.

The protein belongs to the glycosyl hydrolase 5 (cellulase A) family.

It is found in the secreted. The catalysed reaction is Endohydrolysis of (1-&gt;4)-beta-D-glucosidic linkages in cellulose, lichenin and cereal beta-D-glucans.. Its function is as follows. Has endoglucanase activity on substrates containing beta-1,4 glycosidic bonds, like in carboxymethylcellulose (CMC), hydroxyethylcellulose (HEC) and beta-glucan. Involved in the degradation of complex natural cellulosic substrates. The polypeptide is Endo-beta-1,4-glucanase A (eglA) (Emericella nidulans (strain FGSC A4 / ATCC 38163 / CBS 112.46 / NRRL 194 / M139) (Aspergillus nidulans)).